A 1149-amino-acid chain; its full sequence is cGMP-specific 3',5'-cyclic phosphodiesterase (1149 aa).

Low complexity-rich tracts occupy residues 1–19 and 31–47; these read MHGT…DVSS and ATSS…ASSS. Residues 1–175 are disordered; the sequence is MHGTVSRSSS…STTASQQDVD (175 aa). Over residues 48–59 the composition is skewed to polar residues; it reads KPLTNGANKTAI. The segment covering 60–85 has biased composition (low complexity); that stretch reads STAAGVTPGAAPGPGCAAIPASGSSG. Over residues 96 to 108 the composition is skewed to polar residues; it reads QSNNNRPAGSNRS. Over residues 132–158 the composition is skewed to low complexity; it reads SSSSPSQSPSQSQSQSQASIQTQTSQQ. 2 GAF domains span residues 278-430 and 462-643; these read DIDV…GIGI and NLEC…GLGI. The region spanning 673-996 is the PDEase domain; sequence SQDQTEKLTQ…RNWQDLAEKV (324 aa). H749 serves as the catalytic Proton donor. Residues H753, H789, D790, and D900 each coordinate a divalent metal cation. Disordered stretches follow at residues 1037 to 1066 and 1096 to 1149; these read QQSQ…TGAL and SHVS…CALL. Composition is skewed to basic and acidic residues over residues 1042–1053 and 1096–1106; these read GSEDSHTPEHQR and SHVSEDMDDKS. The segment covering 1115-1135 has biased composition (low complexity); the sequence is ASGSMGRMSASSSTSSAGGQM. A compositionally biased stretch (basic residues) spans 1139-1149; sequence SKKRSKLCALL. C1146 bears the Cysteine methyl ester mark. The S-farnesyl cysteine moiety is linked to residue C1146. The propeptide at 1147–1149 is removed in mature form; that stretch reads ALL.

It belongs to the cyclic nucleotide phosphodiesterase family. As to quaternary structure, interacts with PrBP. Requires a divalent metal cation as cofactor.

It is found in the cell membrane. The enzyme catalyses 3',5'-cyclic GMP + H2O = GMP + H(+). In terms of biological role, has a role regulating cGMP transport in Malpighian tubule principal cells. The chain is cGMP-specific 3',5'-cyclic phosphodiesterase from Drosophila yakuba (Fruit fly).